Here is an 85-residue protein sequence, read N- to C-terminus: Beta-insect depressant toxin Lqh-dprIT3d (85 aa).

Residues 1–21 form the signal peptide; it reads MKLLLLLTISASMLIEGLVNA. Positions 22-82 constitute an LCN-type CS-alpha/beta domain; the sequence is DGYIRGGDGC…EWDYETNTCG (61 aa). 4 disulfides stabilise this stretch: Cys-31–Cys-81, Cys-35–Cys-56, Cys-42–Cys-63, and Cys-46–Cys-65. The residue at position 82 (Gly-82) is a Glycine amide.

This sequence belongs to the long (4 C-C) scorpion toxin superfamily. Sodium channel inhibitor family. Beta subfamily. As to expression, expressed by the venom gland.

The protein resides in the secreted. Depressant insect beta-toxins cause a transient contraction paralysis followed by a slow flaccid paralysis. They bind voltage-independently at site-4 of sodium channels (Nav) and block action potentials, primarily by depolarizing the axonal membrane and suppressing the sodium current. This depressant toxin is active only on insects. It is found in a relatively small amount in the venom, and its activity on insects is 10-fold higher compared to other known depressant toxins. The sequence is that of Beta-insect depressant toxin Lqh-dprIT3d from Leiurus hebraeus (Hebrew deathstalker scorpion).